Here is a 107-residue protein sequence, read N- to C-terminus: Replication initiation control protein YabA (107 aa).

Zn(2+) is bound by residues H81, C83, C97, and C100.

This sequence belongs to the YabA family. In terms of assembly, homotetramer. Interacts with both DnaA and DnaN, acting as a bridge between these two proteins. Zn(2+) is required as a cofactor.

Its subcellular location is the cytoplasm. It is found in the nucleoid. In terms of biological role, involved in control of chromosome replication initiation. Inhibits the cooperative binding of DnaA to the oriC region, thus negatively regulating initiation of chromosome replication. Inhibits the ability of DnaA-ATP to form a helix on DNA; does not disassemble preformed DnaA-DNA helices. Decreases the residence time of DnaA on the chromosome at its binding sites (oriC, replication forks and promoter-binding sites). Tethers DnaA to the replication machinery via the DNA polymerase beta sliding clamp subunit (dnaN). Associates with oriC and other DnaA targets on the chromosome in a DnaA-dependent manner. This chain is Replication initiation control protein YabA, found in Streptococcus pyogenes serotype M18 (strain MGAS8232).